We begin with the raw amino-acid sequence, 276 residues long: Putative respiratory nitrate reductase heme subunit ORF7 (276 aa).

Met-138 and Lys-228 together coordinate heme b.

Probable multiprotein complex; a catalytic heterodimer of an alpha and beta chain is proposed to associate with additional subunits involved in membrane attachment and electron transfer. Heme b serves as cofactor.

It is found in the cell membrane. The respiratory membrane-bound nitrate reductase enzyme complex plays a role in generation of metabolic energy by using nitrate as a terminal electron acceptor during anaerobic conditions. May transfer electrons to the iron-sulfur centers of the catalytic beta subunit. This chain is Putative respiratory nitrate reductase heme subunit ORF7, found in Haloferax mediterranei (strain ATCC 33500 / DSM 1411 / JCM 8866 / NBRC 14739 / NCIMB 2177 / R-4) (Halobacterium mediterranei).